The sequence spans 823 residues: Protein phosphatase 1 regulatory subunit 29 (823 aa).

The signal sequence occupies residues 1 to 22; the sequence is MLRLGLCAAALLCVCQPGAVRA. Residues 23–397 lie on the Extracellular side of the membrane; sequence DCWLIEGDKG…APSTSTTTHY (375 aa). A glycan (N-linked (GlcNAc...) asparagine) is linked at Asn54. LRR repeat units follow at residues 56-77, 80-101, 104-125, 128-149, and 152-173; these read TVHD…SLNR, NLTD…AFLG, SLQV…MLRG, RLQF…AFSE, and SLIS…TFAS. Residues Asn80, Asn85, and Asn117 are each glycosylated (N-linked (GlcNAc...) asparagine). Residues 185-247 form the LRRCT domain; sequence NPFNCECDLF…ITVLQAKCRN (63 aa). Residues Asn205 and Asn247 are each glycosylated (N-linked (GlcNAc...) asparagine). The disordered stretch occupies residues 249–294; it reads SMPARPVSHPTPYSTDAQREPDENSGFNPDEILSVEPPASSTTDAS. The Fibronectin type-III domain occupies 292–379; that stretch reads DASAGPAIKL…FNHTCLTFTT (88 aa). A helical membrane pass occupies residues 398–418; that stretch reads IMTILGCLFGMVIVLGAVYYC. At 419–823 the chain is on the cytoplasmic side; the sequence is LRKRRMQEEK…WKGVSAQQKL (405 aa). The disordered stretch occupies residues 590–624; that stretch reads ASSAATPGALERPSFLSPPYKESSHHPLQRQLSAD. 3 positions are modified to phosphoserine: Ser622, Ser671, and Ser675.

Interacts with PPP1CA.

The protein resides in the membrane. Its function is as follows. Inhibits phosphatase activity of protein phosphatase 1 (PP1) complexes. The chain is Protein phosphatase 1 regulatory subunit 29 (Elfn2) from Mus musculus (Mouse).